The sequence spans 341 residues: MIQEAIYQVINKQDLDLDKTIQVMEEIMEGRATNAQIGSFLTAMRMKGETIDEITACATVMRQKCKRIHPEKDVLDIVGTGGDEANTFNISTVSSFVVSAGGVPVAKHGGRSVSSKCGSADLLEALGINIALSAEQSAEILQKIGMCFMFAPTYHASMKYAAPVRKELSVRTIFNILGPLANPAGANMQLLGVYDENLVEPLARVLLNLGVKRAMVVHGHDGLDEVTLCNTTTICEVSNGNINSFFLSPEQLGFSRCLLKELVGGDPKKNASIALDILNGSKGPKRDIVVLNSALCLYMSYNQITLRDCVKMAEQLIDSGAAKAQLNKFIELSNSFNQEVK.

5-phospho-alpha-D-ribose 1-diphosphate is bound by residues Gly79, 82 to 83 (GD), Thr87, 89 to 92 (NIST), 107 to 115 (KHGGRSVSS), and Ser119. Gly79 is an anthranilate binding site. Ser91 serves as a coordination point for Mg(2+). Residue Arg165 participates in anthranilate binding. Mg(2+) contacts are provided by Asp224 and Glu225.

Belongs to the anthranilate phosphoribosyltransferase family. Homodimer. The cofactor is Mg(2+).

It carries out the reaction N-(5-phospho-beta-D-ribosyl)anthranilate + diphosphate = 5-phospho-alpha-D-ribose 1-diphosphate + anthranilate. The protein operates within amino-acid biosynthesis; L-tryptophan biosynthesis; L-tryptophan from chorismate: step 2/5. Its function is as follows. Catalyzes the transfer of the phosphoribosyl group of 5-phosphorylribose-1-pyrophosphate (PRPP) to anthranilate to yield N-(5'-phosphoribosyl)-anthranilate (PRA). The polypeptide is Anthranilate phosphoribosyltransferase (Ruminiclostridium cellulolyticum (strain ATCC 35319 / DSM 5812 / JCM 6584 / H10) (Clostridium cellulolyticum)).